We begin with the raw amino-acid sequence, 461 residues long: Ribonuclease inhibitor (461 aa).

Ser2 bears the N-acetylserine mark. A 2 X 5 AA tandem repeats of S-L-D-I-Q region spans residues 2–11 (SLDIQSLDIQ). 15 LRR repeats span residues 20–48 (WAEL…CKDI), 49–76 (SSAL…VHCV), 77–105 (LQGL…CGVL), 106–133 (SSTL…LQLL), 134–162 (CEGL…CEPL), 163–190 (ASVL…VRVL), 191–219 (CQGL…CRDL), 220–247 (CGIV…MAEL), 248–276 (CPGL…CGDL), 277–304 (CRVL…ARLL), 305–333 (CETL…CSHF), 334–361 (SSVL…VREL), 362–390 (CQGL…CSSL), 391–418 (AATL…ILQL), and 419–447 (VESV…EDRL). Residue Thr82 is modified to Phosphothreonine. Ser91 carries the post-translational modification Phosphoserine.

Forms high-affinity heterodimers with RNASE1, ANG and RNASE2. Post-translationally, the N-terminus is blocked. In terms of processing, at least 30 of the 32 cysteine residues are in the reduced form.

The protein localises to the cytoplasm. It localises to the nucleus. Its function is as follows. Ribonuclease inhibitor which inhibits RNASE1, RNASE2 and angiogenin (ANG). May play a role in redox homeostasis. Required to inhibit the cytotoxic tRNA ribonuclease activity of ANG in the cytoplasm in absence of stress. Relocates to the nucleus in response to stress, relieving inhibition of ANG in the cytoplasm, and inhibiting the angiogenic activity of ANG in the nucleus. The protein is Ribonuclease inhibitor of Homo sapiens (Human).